We begin with the raw amino-acid sequence, 268 residues long: Large ribosomal subunit protein uL3 (268 aa).

Gln-156 is modified (N5-methylglutamine). The span at 242–259 (VENEAAPADADNAAPEAA) shows a compositional bias: low complexity. Residues 242–268 (VENEAAPADADNAAPEAAADGEEGTQA) are disordered.

It belongs to the universal ribosomal protein uL3 family. Part of the 50S ribosomal subunit. Forms a cluster with proteins L14 and L19. In terms of processing, methylated by PrmB.

Its function is as follows. One of the primary rRNA binding proteins, it binds directly near the 3'-end of the 23S rRNA, where it nucleates assembly of the 50S subunit. The sequence is that of Large ribosomal subunit protein uL3 from Maricaulis maris (strain MCS10) (Caulobacter maris).